Reading from the N-terminus, the 21-residue chain is QFPTDYDEGEDDRPKSGLGAR.

Residue Q1 is modified to Pyrrolidone carboxylic acid. The span at Q1 to D11 shows a compositional bias: acidic residues. The tract at residues Q1–R21 is disordered. O-linked (GalNAc...) threonine glycosylation is present at T4. The residue at position 6 (Y6) is a Sulfotyrosine.

Heterohexamer; disulfide linked. Contains 2 sets of 3 non-identical chains (alpha, beta and gamma). The 2 heterotrimers are in head to head conformation with the N-termini in a small central domain. Post-translationally, conversion of fibrinogen to fibrin is triggered by thrombin, which cleaves fibrinopeptides A and B from alpha and beta chains, and thus exposes the N-terminal polymerization sites responsible for the formation of the soft clot.

It is found in the secreted. Functionally, cleaved by the protease thrombin to yield monomers which, together with fibrinogen alpha (FGA) and fibrinogen gamma (FGG), polymerize to form an insoluble fibrin matrix. Fibrin has a major function in hemostasis as one of the primary components of blood clots. In addition, functions during the early stages of wound repair to stabilize the lesion and guide cell migration during re-epithelialization. Was originally thought to be essential for platelet aggregation, based on in vitro studies using anticoagulated blood. However subsequent studies have shown that it is not absolutely required for thrombus formation in vivo. Enhances expression of SELP in activated platelets. Maternal fibrinogen is essential for successful pregnancy. Fibrin deposition is also associated with infection, where it protects against IFNG-mediated hemorrhage. May also facilitate the antibacterial immune response via both innate and T-cell mediated pathways. In Syncerus caffer (African buffalo), this protein is Fibrinogen beta chain (FGB).